Here is a 476-residue protein sequence, read N- to C-terminus: NADH-quinone oxidoreductase subunit N (476 aa).

Transmembrane regions (helical) follow at residues 4 to 24 (LLAL…MLTI), 32 to 52 (LTAT…VVAW), 67 to 87 (GLAV…ATLG), 100 to 117 (EYYL…ALVS), 121 to 141 (LAAL…MLAY), 155 to 175 (YMVL…LLYS), 198 to 218 (LMAG…IVPF), 230 to 250 (PAPA…LVLL), 263 to 283 (LHSL…LLAL), 291 to 311 (LLGY…VVND), 319 to 339 (ALYL…VTLL), 366 to 386 (AVLT…GFIG), 406 to 426 (VVAG…TLFL), and 447 to 467 (VVVL…APMI).

Belongs to the complex I subunit 2 family. As to quaternary structure, NDH-1 is composed of 14 different subunits. Subunits NuoA, H, J, K, L, M, N constitute the membrane sector of the complex.

It localises to the cell inner membrane. The enzyme catalyses a quinone + NADH + 5 H(+)(in) = a quinol + NAD(+) + 4 H(+)(out). Functionally, NDH-1 shuttles electrons from NADH, via FMN and iron-sulfur (Fe-S) centers, to quinones in the respiratory chain. The immediate electron acceptor for the enzyme in this species is believed to be ubiquinone. Couples the redox reaction to proton translocation (for every two electrons transferred, four hydrogen ions are translocated across the cytoplasmic membrane), and thus conserves the redox energy in a proton gradient. The chain is NADH-quinone oxidoreductase subunit N from Chromohalobacter salexigens (strain ATCC BAA-138 / DSM 3043 / CIP 106854 / NCIMB 13768 / 1H11).